Reading from the N-terminus, the 343-residue chain is NADH-ubiquinone oxidoreductase chain 2 (343 aa).

The next 8 membrane-spanning stretches (helical) occupy residues 1–21 (MNPMSWLIITTSIALSTTMIT), 59–81 (YYLIQTMASTSMLFAATTNALNT), 96–116 (TIITLALMMKMAAAPFHSWLP), 150–170 (NITLILLSAMLSITMGGLGSL), 178–198 (LMAFSSIAHTGWIMATITMAP), 200–220 (ISTLTFTIYIMTTIPTFLLIN), 241–261 (MTILSMTILSMGGLPPLSGFM), and 270–290 (LISMNMITEATLMAMASLLSL).

It belongs to the complex I subunit 2 family.

It is found in the mitochondrion inner membrane. It catalyses the reaction a ubiquinone + NADH + 5 H(+)(in) = a ubiquinol + NAD(+) + 4 H(+)(out). Functionally, core subunit of the mitochondrial membrane respiratory chain NADH dehydrogenase (Complex I) that is believed to belong to the minimal assembly required for catalysis. Complex I functions in the transfer of electrons from NADH to the respiratory chain. The immediate electron acceptor for the enzyme is believed to be ubiquinone. This is NADH-ubiquinone oxidoreductase chain 2 (MT-ND2) from Lycodon semicarinatus (Ryukyu odd-tooth snake).